Here is a 339-residue protein sequence, read N- to C-terminus: Anthranilate phosphoribosyltransferase (339 aa).

5-phospho-alpha-D-ribose 1-diphosphate-binding positions include G81, 84 to 85 (GD), T89, 91 to 94 (NIST), 109 to 117 (KHGNRNLSS), and T121. G81 lines the anthranilate pocket. Position 93 (S93) interacts with Mg(2+). Residue N112 participates in anthranilate binding. R167 is an anthranilate binding site. 2 residues coordinate Mg(2+): D226 and E227.

Belongs to the anthranilate phosphoribosyltransferase family. As to quaternary structure, homodimer. The cofactor is Mg(2+).

It carries out the reaction N-(5-phospho-beta-D-ribosyl)anthranilate + diphosphate = 5-phospho-alpha-D-ribose 1-diphosphate + anthranilate. The protein operates within amino-acid biosynthesis; L-tryptophan biosynthesis; L-tryptophan from chorismate: step 2/5. Functionally, catalyzes the transfer of the phosphoribosyl group of 5-phosphorylribose-1-pyrophosphate (PRPP) to anthranilate to yield N-(5'-phosphoribosyl)-anthranilate (PRA). This is Anthranilate phosphoribosyltransferase from Ruegeria pomeroyi (strain ATCC 700808 / DSM 15171 / DSS-3) (Silicibacter pomeroyi).